A 488-amino-acid chain; its full sequence is Bile acid receptor (488 aa).

Lys133 participates in a covalent cross-link: Glycyl lysine isopeptide (Lys-Gly) (interchain with G-Cter in SUMO1). The nuclear receptor DNA-binding region spans Asp135–Thr210. The NR C4-type zinc finger occupies Cys138–Cys158. Residues Ser146 and Ser165 each carry the phosphoserine; by PKC/PRKCA modification. Lys168 is modified (N6-acetyllysine; by EP300). The NR C4-type zinc-finger motif lies at Cys174–Cys198. Lys221 carries the post-translational modification N6-methyllysine; by SETD7. Position 228 is an N6-acetyllysine; by EP300 (Lys228). An NR LBD domain is found at Asp264 to Gln488. Lys291 participates in a covalent cross-link: Glycyl lysine isopeptide (Lys-Gly) (interchain with G-Cter in SUMO1). Chenodeoxycholate is bound by residues Arg347, Tyr377, and Tyr385. Residue Thr458 is modified to Phosphothreonine; by PKC/PRKCZ. Residue His463 participates in chenodeoxycholate binding.

It belongs to the nuclear hormone receptor family. NR1 subfamily. As to quaternary structure, heterodimer with RXRA; the heterodimerization enhances the binding affinity for LXXLL motifs from coactivators. Binds DNA predominantly as a heterodimer with RXRA. After activation by agonist binding interacts with coactivators. Interacts with PPARGC1A, SMARCA4 and EP300. Interacts with NCOA1, NCOA2, CARM1, SETD7, PRMT1, GPS2, SMARCA4 and MED1. Interacts with XRCC5 and XRCC6; decreasing NR1H4/FXR transactivation activity towards ABCB11/BSEP. Interacts with PAGR1 and NCOA6; indicative for an association with an MLL2/MLL3 complex (ASCOM). Interacts with NR5A2. Acetylated by EP300. Lys-228 as is the major acetylation site for EP300; the dynamicly regulated acetylation inhibits heterodimerization with RXRA and transactivation activity. Deacetylated by SIRT1. Elevated acetylation levels are found in metabolic disease states (mouse models of obesity and type II diabetes). In terms of processing, methylation may increase transactivation of target genes. Post-translationally, phosphorylation by PKC/PRKCA increases transactivation activity by promoting association with PPARGC1A. Sumoylated upon ligand binding. In terms of tissue distribution, expressed in liver and kidney. Expressed in pancreatic beta cells and macrophages. Expressed in the villus epithelium in adult ileum, with highest expression in the intervillus regions. Expression in colon is reduced by inflammation.

The protein resides in the nucleus. Ligand-activated transcription factor. Receptor for bile acids (BAs) such as chenodeoxycholic acid (CDCA), lithocholic acid, deoxycholic acid (DCA) and allocholic acid (ACA). Plays a essential role in BA homeostasis through the regulation of genes involved in BA synthesis, conjugation and enterohepatic circulation. Also regulates lipid and glucose homeostasis and is involved in innate immune response. The FXR-RXR heterodimer binds predominantly to farnesoid X receptor response elements (FXREs) containing two inverted repeats of the consensus sequence 5'-AGGTCA-3' in which the monomers are spaced by 1 nucleotide (IR-1) but also to tandem repeat DR1 sites with lower affinity, and can be activated by either FXR or RXR-specific ligands. It is proposed that monomeric nuclear receptors such as NR5A2/LRH-1 bound to coregulatory nuclear responsive element (NRE) halfsites located in close proximity to FXREs modulate transcriptional activity. In the liver activates transcription of the corepressor NR0B2 thereby indirectly inhibiting CYP7A1 and CYP8B1 (involved in BA synthesis) implicating at least in part histone demethylase KDM1A resulting in epigenomic repression, and SLC10A1/NTCP (involved in hepatic uptake of conjugated BAs). Activates transcription of the repressor MAFG (involved in regulation of BA synthesis). Activates transcription of SLC27A5/BACS and BAAT (involved in BA conjugation), ABCB11/BSEP (involved in bile salt export) by directly recruiting histone methyltransferase CARM1, and ABCC2/MRP2 (involved in secretion of conjugated BAs) and ABCB4 (involved in secretion of phosphatidylcholine in the small intestine). In ileal enterocytes activates FABP6/IBABP (involved in cytosolic transport), SLC51A/OSTA and SLC51B/OSTB (involved in secretion of conjugated BAs to the portal blood), and repressor NR0B2/SHP thereby indirectly inhibiting SLC10A2/ASBT (involved in BA uptake). In the intestine activates FGF15 expression and secretion leading to hepatic CYP7A1 repression; the function also involves the coordinated induction of hepatic KLB/beta-klotho expression. Transcriptional activation of FABP6/IBAP and SCD1 but not of ABCB11 is isoform-specific. Regulates transcription of liver UGT2B4 and SULT2A1 involved in BA detoxification; binding to the UGT2B4 promoter seems to imply a monomeric transactivation independent of RXRA. Modulates lipid homeostasis by activating liver NR0B2/SHP-mediated repression of SREBF1 isoform SREBP-1C (involved in de novo lipogenesis), expression of PLTP (involved in HDL formation), SCARB1 (involved in HDL hepatic uptake), APOE, APOC1, APOC4, VLDLR and SDC1 (involved in the hepatic uptake of LDL and IDL remnants), and inhibiting expression of MTTP (involved in VLDL assembly). Increases expression of APOC2 (promoting lipoprotein lipase activity implicated in triglyceride clearance). Transrepresses APOA1 probably involving a monomeric competition with NR2A1 for binding to a DR1 element. Also reduces triglyceride clearance by inhibiting expression of ANGPTL3 and APOC3 (both involved in inhibition of lipoprotein lipase). Involved in glucose homeostasis by modulating hepatic gluconeogenesis through activation of NR0B2/SHP-mediated repression of respective genes. Modulates glycogen synthesis (inducing phosphorylation of glycogen synthase kinase-3). Modulates glucose-stimulated insulin secretion and is involved in insulin resistance. Involved in intestinal innate immunity. Plays a role in protecting the distal small intestine against bacterial overgrowth and preservation of the epithelial barrier. Down-regulates inflammatory cytokine expression in several types of immune cells including macrophages and mononuclear cells. Mediates transrepression of TLR4-induced cytokine expression; the function seems to require its sumoylation and prevents N-CoR nuclear receptor corepressor clearance from target genes such as IL1B and NOS2. Involved in the TLR9-mediated protective mechanism in intestinal inflammation. Plays a anti-inflammatory role in liver inflammation; proposed to inhibit pro-inflammatory (but not antiapoptotic) NF-kappa-B signaling. Functionally, activates transcription of IBAP and SDC1. In Mus musculus (Mouse), this protein is Bile acid receptor (Nr1h4).